The chain runs to 428 residues: Peptidase B (428 aa).

K195 and D200 together coordinate Mn(2+). The active site involves K207. Mn(2+)-binding residues include D218, D277, and E279. R281 is an active-site residue.

It belongs to the peptidase M17 family. In terms of assembly, homohexamer. The cofactor is Mn(2+).

It is found in the cytoplasm. It catalyses the reaction Release of an N-terminal amino acid, Xaa, from a peptide or arylamide. Xaa is preferably Glu or Asp but may be other amino acids, including Leu, Met, His, Cys and Gln.. In terms of biological role, probably plays an important role in intracellular peptide degradation. This chain is Peptidase B, found in Enterobacter sp. (strain 638).